The following is a 64-amino-acid chain: Large ribosomal subunit protein uL30 (64 aa).

It belongs to the universal ribosomal protein uL30 family. As to quaternary structure, part of the 50S ribosomal subunit.

This Rhodopseudomonas palustris (strain BisB18) protein is Large ribosomal subunit protein uL30.